The primary structure comprises 210 residues: Large ribosomal subunit protein uL3 (210 aa).

Residues 126–167 (WGFQRGPSGHGSKNIREPGSTGNATFPGRVIKGKKMPGQKGN) are disordered. A compositionally biased stretch (basic residues) spans 156 to 167 (IKGKKMPGQKGN).

It belongs to the universal ribosomal protein uL3 family. As to quaternary structure, part of the 50S ribosomal subunit. Forms a cluster with proteins L14 and L19.

Its function is as follows. One of the primary rRNA binding proteins, it binds directly near the 3'-end of the 23S rRNA, where it nucleates assembly of the 50S subunit. The polypeptide is Large ribosomal subunit protein uL3 (Syntrophobacter fumaroxidans (strain DSM 10017 / MPOB)).